A 491-amino-acid polypeptide reads, in one-letter code: Anthranilate synthase component 1 (491 aa).

L-tryptophan is bound by residues Ser49 and 271–273; that span reads PYL. 306-307 contacts chorismate; it reads GT. Glu333 is a Mg(2+) binding site. Residues Tyr421, Arg441, 455-457, and Gly457 contribute to the chorismate site; that span reads GAG. Glu470 contributes to the Mg(2+) binding site.

This sequence belongs to the anthranilate synthase component I family. Heterotetramer consisting of two non-identical subunits: a beta subunit (TrpG) and a large alpha subunit (TrpE). Mg(2+) is required as a cofactor.

It carries out the reaction chorismate + L-glutamine = anthranilate + pyruvate + L-glutamate + H(+). It participates in amino-acid biosynthesis; L-tryptophan biosynthesis; L-tryptophan from chorismate: step 1/5. Its activity is regulated as follows. Feedback inhibited by tryptophan. Functionally, part of a heterotetrameric complex that catalyzes the two-step biosynthesis of anthranilate, an intermediate in the biosynthesis of L-tryptophan. In the first step, the glutamine-binding beta subunit (TrpG) of anthranilate synthase (AS) provides the glutamine amidotransferase activity which generates ammonia as a substrate that, along with chorismate, is used in the second step, catalyzed by the large alpha subunit of AS (TrpE) to produce anthranilate. In the absence of TrpG, TrpE can synthesize anthranilate directly from chorismate and high concentrations of ammonia. The polypeptide is Anthranilate synthase component 1 (trpE) (Neisseria meningitidis serogroup A / serotype 4A (strain DSM 15465 / Z2491)).